We begin with the raw amino-acid sequence, 208 residues long: MNRKSIAKGKLVRRFGVNIFEQPKYDKLLKKKTNPPGMHGRSRRTKVTEYGKQLIEKQKVKFTYGVSERQLTNVFKEARRQHGVTGDNLLALLERRIDNIVYRAGFAISRAHARQIVSHGIIILNGRRVTIPSITLRANDIIQVKEKDSFKKLVRSNIEKTSTLRKLPDWIEVNADALNVKIIRTPSRDEIPTLANEQMIVEYYSKRA.

Positions 95-159 constitute an S4 RNA-binding domain; sequence RRIDNIVYRA…FKKLVRSNIE (65 aa).

The protein belongs to the universal ribosomal protein uS4 family. Part of the 30S ribosomal subunit. Contacts protein S5. The interaction surface between S4 and S5 is involved in control of translational fidelity.

Its function is as follows. One of the primary rRNA binding proteins, it binds directly to 16S rRNA where it nucleates assembly of the body of the 30S subunit. In terms of biological role, with S5 and S12 plays an important role in translational accuracy. This Borrelia recurrentis (strain A1) protein is Small ribosomal subunit protein uS4.